Consider the following 312-residue polypeptide: Ribosomal protein L11 methyltransferase (312 aa).

S-adenosyl-L-methionine-binding residues include Thr-164, Gly-185, Asp-207, and Asn-249.

Belongs to the methyltransferase superfamily. PrmA family.

It localises to the cytoplasm. The catalysed reaction is L-lysyl-[protein] + 3 S-adenosyl-L-methionine = N(6),N(6),N(6)-trimethyl-L-lysyl-[protein] + 3 S-adenosyl-L-homocysteine + 3 H(+). Functionally, methylates ribosomal protein L11. In Clostridium novyi (strain NT), this protein is Ribosomal protein L11 methyltransferase.